The sequence spans 432 residues: Malate dehydrogenase [NADP], chloroplastic (432 aa).

A chloroplast-targeting transit peptide spans 1–40; the sequence is MGLSTVYSPAGPRLVPAPLGRCRSAQPRRPRRAPLATVRC. Residues 18–37 form a disordered region; that stretch reads PLGRCRSAQPRRPRRAPLAT. A disulfide bond links Cys-67 and Cys-72. 96–102 provides a ligand contact to NADP(+); it reads GAAGMIS. Residues Arg-177 and Arg-183 each coordinate substrate. Asn-190 contributes to the NADP(+) binding site. Gln-197 contributes to the NAD(+) binding site. 214 to 216 lines the NADP(+) pocket; the sequence is VGN. The substrate site is built by Asn-216 and Arg-247. The Proton acceptor role is filled by His-272. A disulfide bridge links Cys-408 with Cys-420.

Belongs to the LDH/MDH superfamily. MDH type 2 family. In terms of assembly, homodimer.

The protein resides in the plastid. It localises to the chloroplast. It catalyses the reaction (S)-malate + NADP(+) = oxaloacetate + NADPH + H(+). Its activity is regulated as follows. Chloroplast NADP-MDH is activated upon illumination. In order to be enzymatically active, disulfide bridges on the protein must be reduced by thioredoxin which receives electrons from ferredoxin and the electron transport system of photosynthesis. In terms of biological role, the chloroplastic, NADP-dependent form is essential for the photosynthesis C4 cycle, which allows plants to circumvent the problem of photorespiration. In C4 plants, NADP-MDH activity acts to convert oxaloacetate to malate in chloroplasts of mesophyll cells for transport to the bundle sheath cells. The sequence is that of Malate dehydrogenase [NADP], chloroplastic from Zea mays (Maize).